Consider the following 244-residue polypeptide: Purine nucleoside phosphorylase HI_0175 (244 aa).

The Zn(2+) site is built by His-70, Cys-105, and His-122.

The protein belongs to the purine nucleoside phosphorylase YfiH/LACC1 family. Homodimer. Cu(2+) serves as cofactor. Zn(2+) is required as a cofactor.

The enzyme catalyses adenosine + phosphate = alpha-D-ribose 1-phosphate + adenine. The catalysed reaction is S-methyl-5'-thioadenosine + phosphate = 5-(methylsulfanyl)-alpha-D-ribose 1-phosphate + adenine. It catalyses the reaction inosine + phosphate = alpha-D-ribose 1-phosphate + hypoxanthine. It carries out the reaction adenosine + H2O + H(+) = inosine + NH4(+). Functionally, purine nucleoside enzyme that catalyzes the phosphorolysis of adenosine and inosine nucleosides, yielding D-ribose 1-phosphate and the respective free bases, adenine and hypoxanthine. Also catalyzes the phosphorolysis of S-methyl-5'-thioadenosine into adenine and S-methyl-5-thio-alpha-D-ribose 1-phosphate. Also has adenosine deaminase activity. This chain is Purine nucleoside phosphorylase HI_0175, found in Haemophilus influenzae (strain ATCC 51907 / DSM 11121 / KW20 / Rd).